A 273-amino-acid chain; its full sequence is Large ribosomal subunit protein uL2cz/uL2cy (273 aa).

Disordered stretches follow at residues 1 to 22 and 223 to 254; these read MAIH…DSQV and MNPV…PALG.

Belongs to the universal ribosomal protein uL2 family. Part of the 50S ribosomal subunit.

It is found in the plastid. The protein resides in the chloroplast. The sequence is that of Large ribosomal subunit protein uL2cz/uL2cy (rpl2-A) from Drimys granadensis.